A 379-amino-acid polypeptide reads, in one-letter code: Anhydro-N-acetylmuramic acid kinase (379 aa).

An ATP-binding site is contributed by 9–16 (GTSADGVD).

Belongs to the anhydro-N-acetylmuramic acid kinase family.

The catalysed reaction is 1,6-anhydro-N-acetyl-beta-muramate + ATP + H2O = N-acetyl-D-muramate 6-phosphate + ADP + H(+). Its pathway is amino-sugar metabolism; 1,6-anhydro-N-acetylmuramate degradation. It functions in the pathway cell wall biogenesis; peptidoglycan recycling. Catalyzes the specific phosphorylation of 1,6-anhydro-N-acetylmuramic acid (anhMurNAc) with the simultaneous cleavage of the 1,6-anhydro ring, generating MurNAc-6-P. Is required for the utilization of anhMurNAc either imported from the medium or derived from its own cell wall murein, and thus plays a role in cell wall recycling. This is Anhydro-N-acetylmuramic acid kinase from Prochlorococcus marinus (strain MIT 9313).